The sequence spans 709 residues: Elongation factor G (709 aa).

In terms of domain architecture, tr-type G spans 9-295 (AKVRNIGIMA…AVVRYLPTPL (287 aa)). GTP is bound by residues 18–25 (AHIDAGKT), 86–90 (DTPGH), and 140–143 (NKLD).

Belongs to the TRAFAC class translation factor GTPase superfamily. Classic translation factor GTPase family. EF-G/EF-2 subfamily.

It localises to the cytoplasm. Its function is as follows. Catalyzes the GTP-dependent ribosomal translocation step during translation elongation. During this step, the ribosome changes from the pre-translocational (PRE) to the post-translocational (POST) state as the newly formed A-site-bound peptidyl-tRNA and P-site-bound deacylated tRNA move to the P and E sites, respectively. Catalyzes the coordinated movement of the two tRNA molecules, the mRNA and conformational changes in the ribosome. The sequence is that of Elongation factor G from Streptomyces avermitilis (strain ATCC 31267 / DSM 46492 / JCM 5070 / NBRC 14893 / NCIMB 12804 / NRRL 8165 / MA-4680).